The chain runs to 63 residues: Large ribosomal subunit protein bL28 (63 aa).

This sequence belongs to the bacterial ribosomal protein bL28 family.

This is Large ribosomal subunit protein bL28 from Clostridium acetobutylicum (strain ATCC 824 / DSM 792 / JCM 1419 / IAM 19013 / LMG 5710 / NBRC 13948 / NRRL B-527 / VKM B-1787 / 2291 / W).